We begin with the raw amino-acid sequence, 225 residues long: uncharacterized protein (225 aa).

6 consecutive transmembrane segments (helical) span residues 1–21, 31–51, 56–76, 88–108, 145–165, and 205–225; these read MFIG…AKKV, SPLL…NVPY, LGGG…AIPL, VEII…TALI, VTAV…PMVI, and VSMI…LSFM.

It belongs to the YohK (E.coli)/YwbG (IPA-22R) (B.subtilis) family.

The protein resides in the cell membrane. This is an uncharacterized protein from Bacillus subtilis (strain 168).